Reading from the N-terminus, the 593-residue chain is Mitosis inducer protein kinase cdr1 (593 aa).

The region spanning 12 to 258 (WRLGKTLGTG…IPEVFSHPFL (247 aa)) is the Protein kinase domain. Residues 18-26 (LGTGSTSCV) and Lys41 each bind ATP. Asp128 acts as the Proton acceptor in catalysis. Ser550 is subject to Phosphoserine.

This sequence belongs to the protein kinase superfamily. CAMK Ser/Thr protein kinase family. NIM1 subfamily. In terms of assembly, interacts with msp1.

It carries out the reaction L-seryl-[protein] + ATP = O-phospho-L-seryl-[protein] + ADP + H(+). The catalysed reaction is L-threonyl-[protein] + ATP = O-phospho-L-threonyl-[protein] + ADP + H(+). Functionally, this protein, a dose-dependent mitotic inducer, appears to function as a negative regulator of mitosis inhibitor wee1 by phosphorylating and inactivating it. The chain is Mitosis inducer protein kinase cdr1 (cdr1) from Schizosaccharomyces pombe (strain 972 / ATCC 24843) (Fission yeast).